Reading from the N-terminus, the 280-residue chain is Four and a half LIM domains protein 1 (280 aa).

An N-acetylserine modification is found at Ser-2. Lys-4 carries the N6-acetyllysine modification. A C4-type zinc finger spans residues 7–31 (CHYCRDPLQGKKYVQKDGRHCCLKC). 4 LIM zinc-binding domains span residues 40-92 (CVEC…CNKC), 101-153 (CKGC…CVTC), 162-212 (CVKC…CVDC), and 221-276 (CAGC…CPDC). Residue Lys-86 forms a Glycyl lysine isopeptide (Lys-Gly) (interchain with G-Cter in SUMO2) linkage.

The protein localises to the cytoplasm. May have an involvement in muscle development or hypertrophy. Isoform 2 binds to RBP-J and plays a negative regulatory role in the RBP-J-mediated transcription in mammalian systems. In Rattus norvegicus (Rat), this protein is Four and a half LIM domains protein 1 (Fhl1).